We begin with the raw amino-acid sequence, 243 residues long: Triosephosphate isomerase (243 aa).

9-11 contributes to the substrate binding site; that stretch reads NWK. Histidine 96 (electrophile) is an active-site residue. Catalysis depends on glutamate 165, which acts as the Proton acceptor. Residues glycine 171, serine 204, and 225–226 contribute to the substrate site; that span reads GG.

Belongs to the triosephosphate isomerase family. In terms of assembly, homodimer.

The protein resides in the cytoplasm. It carries out the reaction D-glyceraldehyde 3-phosphate = dihydroxyacetone phosphate. Its pathway is carbohydrate biosynthesis; gluconeogenesis. The protein operates within carbohydrate degradation; glycolysis; D-glyceraldehyde 3-phosphate from glycerone phosphate: step 1/1. Functionally, involved in the gluconeogenesis. Catalyzes stereospecifically the conversion of dihydroxyacetone phosphate (DHAP) to D-glyceraldehyde-3-phosphate (G3P). The chain is Triosephosphate isomerase from Prochlorococcus marinus (strain SARG / CCMP1375 / SS120).